We begin with the raw amino-acid sequence, 285 residues long: UPF0703 protein YcgQ (285 aa).

Helical transmembrane passes span 4–24 (LLVL…GNLT), 34–54 (LSFI…YLFI), 89–109 (LIYV…IATL), and 210–230 (FVLR…GMLV).

It belongs to the UPF0703 family.

Its subcellular location is the cell membrane. This Bacillus subtilis (strain 168) protein is UPF0703 protein YcgQ (ycgQ).